The sequence spans 483 residues: MKDYEVVIGLEVHVELATKTKIFCGCSTEFGGAPNSHTCPVCTGMPGSLPVLNKKVVEYAAAVGLATNCTITQDCKFDRKNYFYPDNPQNYQISQLYLPICRNGHVDVTLSDGTEKTIRIHEIHMEEDAGKLVHDEWEGVSYVDYNRSGVPLIEIVSEPDMRSAEEVIAYLTKLRTTIQYLGASDCKLQEGSMRADVNLSVRERGSNEFGTRTETKNLNSFAAIERAIKAETARQIDLIEAGEKVVQETRRWNDDKEYSYAMRSKEDAQDYRYFPDPDLVPIHISDEYLAELKAKQPEFKDEKKARYIEEFGLPEYDAEILTDSKKFTEIFEEATAICNQPKKVSNWIMGETMRLMKEESAKTGREFRAEELTFSPESLAKIITLVEKKEINNAAAKEIFEHVFAENVDVDAYVEEHGLKQVNDEGALRATVEKVIADNPQSVADYKGGKKQAIGYLVGQTMKAMQGKANPGMVNALLQELLK.

This sequence belongs to the GatB/GatE family. GatB subfamily. As to quaternary structure, heterotrimer of A, B and C subunits.

It carries out the reaction L-glutamyl-tRNA(Gln) + L-glutamine + ATP + H2O = L-glutaminyl-tRNA(Gln) + L-glutamate + ADP + phosphate + H(+). The enzyme catalyses L-aspartyl-tRNA(Asn) + L-glutamine + ATP + H2O = L-asparaginyl-tRNA(Asn) + L-glutamate + ADP + phosphate + 2 H(+). Its function is as follows. Allows the formation of correctly charged Asn-tRNA(Asn) or Gln-tRNA(Gln) through the transamidation of misacylated Asp-tRNA(Asn) or Glu-tRNA(Gln) in organisms which lack either or both of asparaginyl-tRNA or glutaminyl-tRNA synthetases. The reaction takes place in the presence of glutamine and ATP through an activated phospho-Asp-tRNA(Asn) or phospho-Glu-tRNA(Gln). This is Aspartyl/glutamyl-tRNA(Asn/Gln) amidotransferase subunit B from Lachnospira eligens (strain ATCC 27750 / DSM 3376 / VPI C15-48 / C15-B4) (Eubacterium eligens).